The primary structure comprises 843 residues: MKVISLFILVGFIGEFQSFSSASSPVNCQWDFYAPWSECNGCTKTQTRRRSVAVYGQYGGQPCVGNAFETQSCEPTRGCPTEEGCGERFRCFSGQCISKSLVCNGDSDCDEDSADEDRCEDSERRPSCDIDKPPPNIELTGNGYNELTGQFRNRVINTKSFGGQCRKVFSGDGKDFYRLSGNVLSYTFQVKINNDFNYEFYNSTWSYVKHTSTEHTSSSRKRSFFRSSSSSSRSYTSHTNEIHKGKSYQLLVVENTVEVAQFINNNPEFLQLAEPFWKELSHLPSLYDYSAYRRLIDQYGTHYLQSGSLGGEYRVLFYVDSEKLKQNDFNSVEEKKCKSSGWHFVVKFSSHGCKELENALKAASGTQNNVLRGEPFIRGGGAGFISGLSYLELDNPAGNKRRYSAWAESVTNLPQVIKQKLTPLYELVKEVPCASVKKLYLKWALEEYLDEFDPCHCRPCQNGGLATVEGTHCLCHCKPYTFGAACEQGVLVGNQAGGVDGGWSCWSSWSPCVQGKKTRSRECNNPPPSGGGRSCVGETTESTQCEDEELEHLRLLEPHCFPLSLVPTEFCPSPPALKDGFVQDEGTMFPVGKNVVYTCNEGYSLIGNPVARCGEDLRWLVGEMHCQKIACVLPVLMDGIQSHPQKPFYTVGEKVTVSCSGGMSLEGPSAFLCGSSLKWSPEMKNARCVQKENPLTQAVPKCQRWEKLQNSRCVCKMPYECGPSLDVCAQDERSKRILPLTVCKMHVLHCQGRNYTLTGRDSCTLPASAEKACGACPLWGKCDAESSKCVCREASECEEEGFSICVEVNGKEQTMSECEAGALRCRGQSISVTSIRPCAAETQ.

A signal peptide spans M1–A22. A TSP type-1 1 domain is found at N27 to P80. 7 disulfide bridges follow: C28–C63, C39–C73, C42–C79, C85–C96, C91–C109, C103–C119, and C128–C165. W36 carries C-linked (Man) tryptophan glycosylation. The 39-residue stretch at E83–D121 folds into the LDL-receptor class A domain. Residues D108–E120 show a composition bias toward acidic residues. Residues D108 to G143 are disordered. Basic and acidic residues predominate over residues D121–K132. The MACPF domain maps to R124–H456. N202 carries an N-linked (GlcNAc...) asparagine glycan. The disordered stretch occupies residues S219–N240. A compositionally biased stretch (low complexity) spans F225–S234. 12 cysteine pairs are disulfide-bonded: C337/C353, C433/C560, C455/C505, C457/C473, C460/C475, C477/C486, C512/C545, C523/C535, C571/C613, C599/C626, C631/C673, and C659/C688. One can recognise an EGF-like domain in the interval C457 to E487. In terms of domain architecture, TSP type-1 2 spans D500–E549. W503, W506, and W509 each carry a C-linked (Man) tryptophan; partial glycan. The segment at K516–E538 is disordered. CCP stretches follow at residues C545 to E615 and D616 to N693. 2 Sushi domains span residues E569 to K628 and I629 to Q690. Factor I module (FIM) stretches follow at residues L695–E770 and K771–Q843. The O-linked (GalNAc...) threonine glycan is linked to T696. 9 disulfides stabilise this stretch: C702–C713, C715–C750, C721–C743, C728–C763, C773–C782, C776–C789, C791–C825, C797–C818, and C805–C838. N754 is a glycosylation site (N-linked (GlcNAc...) (complex) asparagine).

It belongs to the complement C6/C7/C8/C9 family. Monomer or dimer; as a C5b-7 complex it can also form multimeric rosettes. Component of the membrane attack complex (MAC), composed of complement C5b, C6, C7, C8A, C8B, C8G and multiple copies of the pore-forming subunit C9. C-, N- and O-glycosylated. O-glycosylated with core 1 or possibly core 8 glycans.

Its subcellular location is the secreted. It is found in the target cell membrane. Its activity is regulated as follows. Membrane attack complex (MAC) assembly is inhibited by CD59, thereby protecting self-cells from damage during complement activation. MAC assembly is also inhibited by clusterin (CLU) chaperones that inhibit polymerization of C9. In terms of biological role, component of the membrane attack complex (MAC), a multiprotein complex activated by the complement cascade, which inserts into a target cell membrane and forms a pore, leading to target cell membrane rupture and cell lysis. The MAC is initiated by proteolytic cleavage of C5 into complement C5b in response to the classical, alternative, lectin and GZMK complement pathways. The complement pathways consist in a cascade of proteins that leads to phagocytosis and breakdown of pathogens and signaling that strengthens the adaptive immune system. C7 serves as a membrane anchor. During MAC assembly, associates with C5b and C6 to form the C5b-7 complex, a key lipophilic precursor of the MAC complex, which associates with the outer leaflet and reduces the energy for membrane bending. The polypeptide is Complement component C7 (Homo sapiens (Human)).